The following is a 338-amino-acid chain: NADPH dehydrogenase (338 aa).

22-25 serves as a coordination point for FMN; the sequence is SPMC. Tyr-27 contributes to the substrate binding site. Residues Ala-59 and Gln-101 each contribute to the FMN site. Residue 163–166 coordinates substrate; the sequence is HAAH. FMN contacts are provided by residues Arg-214 and 306-307; that span reads GR.

Belongs to the NADH:flavin oxidoreductase/NADH oxidase family. NamA subfamily. In terms of assembly, homotetramer. FMN is required as a cofactor.

The enzyme catalyses A + NADPH + H(+) = AH2 + NADP(+). In terms of biological role, catalyzes the reduction of the double bond of an array of alpha,beta-unsaturated aldehydes and ketones. It also reduces the nitro group of nitroester and nitroaromatic compounds. It could have a role in detoxification processes. The sequence is that of NADPH dehydrogenase from Listeria monocytogenes serotype 4b (strain CLIP80459).